The sequence spans 297 residues: uncharacterized protein (297 aa).

Residues methionine 1–aspartate 44 form a disordered region. Positions proline 10–proline 23 are enriched in low complexity. The span at leucine 26–aspartate 44 shows a compositional bias: basic and acidic residues.

This is an uncharacterized protein from Invertebrate iridescent virus 3 (IIV-3).